The following is a 283-amino-acid chain: Phosphatidylserine decarboxylase proenzyme (283 aa).

Active-site charge relay system; for autoendoproteolytic cleavage activity residues include Asp-96, His-152, and Ser-250. The active-site Schiff-base intermediate with substrate; via pyruvic acid; for decarboxylase activity is the Ser-250. At Ser-250 the chain carries Pyruvic acid (Ser); by autocatalysis.

Belongs to the phosphatidylserine decarboxylase family. PSD-B subfamily. Prokaryotic type I sub-subfamily. As to quaternary structure, heterodimer of a large membrane-associated beta subunit and a small pyruvoyl-containing alpha subunit. Pyruvate is required as a cofactor. In terms of processing, is synthesized initially as an inactive proenzyme. Formation of the active enzyme involves a self-maturation process in which the active site pyruvoyl group is generated from an internal serine residue via an autocatalytic post-translational modification. Two non-identical subunits are generated from the proenzyme in this reaction, and the pyruvate is formed at the N-terminus of the alpha chain, which is derived from the carboxyl end of the proenzyme. The autoendoproteolytic cleavage occurs by a canonical serine protease mechanism, in which the side chain hydroxyl group of the serine supplies its oxygen atom to form the C-terminus of the beta chain, while the remainder of the serine residue undergoes an oxidative deamination to produce ammonia and the pyruvoyl prosthetic group on the alpha chain. During this reaction, the Ser that is part of the protease active site of the proenzyme becomes the pyruvoyl prosthetic group, which constitutes an essential element of the active site of the mature decarboxylase.

It localises to the cell membrane. The enzyme catalyses a 1,2-diacyl-sn-glycero-3-phospho-L-serine + H(+) = a 1,2-diacyl-sn-glycero-3-phosphoethanolamine + CO2. Its pathway is phospholipid metabolism; phosphatidylethanolamine biosynthesis; phosphatidylethanolamine from CDP-diacylglycerol: step 2/2. In terms of biological role, catalyzes the formation of phosphatidylethanolamine (PtdEtn) from phosphatidylserine (PtdSer). The polypeptide is Phosphatidylserine decarboxylase proenzyme (Acinetobacter baumannii (strain AB0057)).